The sequence spans 147 residues: UPF0260 protein PMI1174 (147 aa).

Belongs to the UPF0260 family.

The protein is UPF0260 protein PMI1174 of Proteus mirabilis (strain HI4320).